Here is a 631-residue protein sequence, read N- to C-terminus: Pescadillo homolog (631 aa).

The BRCT domain maps to 321–414 (RLRTLFKGLK…QLLPTNDYFL (94 aa)). Residues 428-442 (SKRDSYIPPEEKALH) are compositionally biased toward basic and acidic residues. 2 disordered regions span residues 428–471 (SKRD…EADQ) and 489–560 (YKKY…EVDE). Phosphoserine occurs at positions 453 and 457. Acidic residues-rich tracts occupy residues 453–471 (SEEE…EADQ) and 498–525 (VNED…EDVD). Positions 526 to 538 (EQTKRKQQEKEKM) are enriched in basic and acidic residues. Basic residues predominate over residues 544–553 (KVHKVNKRQV). Residues 593–629 (LRKKRRNIDADTKEAKKAAKREARKLAAEAAARAAKL) are a coiled coil.

It belongs to the pescadillo family.

It is found in the nucleus. Its subcellular location is the nucleolus. It localises to the nucleoplasm. Functionally, required for maturation of ribosomal RNAs and formation of the large ribosomal subunit. The polypeptide is Pescadillo homolog (Drosophila persimilis (Fruit fly)).